The chain runs to 435 residues: MKTTYVNATIVTMNEQNEVIENGYIIVENDQIIDVKSGEFANDFEVDEVIDMKGKWVLPGLVNTHTHVVMSLLRGIGDDMLLQPWLETRIWPLESQFTPELAVASTELGLLEMVKSGTTSFSDMFNPIGVDQDAIMETVSRSGMRAAVSRTLFSFGTKEDEKKAIEEAEKYVKRYYNESGMLTTMVAPHSPYTCSTELLEECARIAVENQTMVHIHLSETEREVRDIEAKYGKRPVEYAASCGLFKRPTVIAHGVVLNDNERAFLAEHDVRVAHNPNSNLKLGSGIANVKAMLEAGIKVGIATDSVASNNNLDMFEEMRIATLLQKGIHQDATALPVETALTLATKGAAEVIGMKQTGSLEIGKCADFITIDPSNKPHLQPADEVLSHLVYAASGKDISDVIINGKRVVWNGECKTLDEERIIFEASRYKRGLQR.

Histidine 65 and histidine 67 together coordinate Zn(2+). Substrate-binding residues include glutamate 94, arginine 150, and histidine 189. Zn(2+) is bound at residue histidine 216. Residues glutamate 219 and aspartate 304 each contribute to the substrate site. Aspartate 304 is a Zn(2+) binding site.

The protein belongs to the metallo-dependent hydrolases superfamily. MTA/SAH deaminase family. The cofactor is Zn(2+).

It carries out the reaction S-adenosyl-L-homocysteine + H2O + H(+) = S-inosyl-L-homocysteine + NH4(+). It catalyses the reaction S-methyl-5'-thioadenosine + H2O + H(+) = S-methyl-5'-thioinosine + NH4(+). Catalyzes the deamination of 5-methylthioadenosine and S-adenosyl-L-homocysteine into 5-methylthioinosine and S-inosyl-L-homocysteine, respectively. Is also able to deaminate adenosine. The chain is 5-methylthioadenosine/S-adenosylhomocysteine deaminase from Bacillus cereus (strain AH187).